A 663-amino-acid chain; its full sequence is Ankyrin repeat and SAM domain-containing protein 3 (663 aa).

The tract at residues M1–S421 is interaction with NEK7. Residues S2 and S5 each carry the phosphoserine modification. ANK repeat units follow at residues D34–K64, G68–V97, E101–M130, Q134–V163, Y168–T197, and S201–L220. N96 is subject to 3-hydroxyasparagine. Phosphoserine is present on residues S201, S225, S243, S244, and S245. 2 disordered regions span residues L242–K261 and T278–G425. Phosphothreonine is present on T318. S319 bears the Phosphoserine mark. Residues N322–P337 show a composition bias toward basic and acidic residues. A phosphoserine mark is found at S366, S369, and S373. Residues K378–H395 show a composition bias toward basic residues. Positions S424–S487 constitute an SAM domain. Residues A500–A575 are a coiled coil. S540 bears the Phosphoserine mark. Disordered regions lie at residues K585 to S604 and A637 to G663. Residues E641–E651 are compositionally biased toward acidic residues. Residues I654–G663 show a composition bias toward basic and acidic residues.

As to quaternary structure, homooligomer. Interacts (via SAM domain) with ANKS6 (via SAM domain). Interacts with BICC1. Interacts with NPHP1. Interacts with NEK8. Interacts with HIF1AN. Interacts with NEK7; this interaction alters the subcellular distribution of NEK7 by preventing its nuclear translocation. Hydroxylated at Asn-96, most probably by HIF1AN. In terms of processing, phosphorylations at Ser-5, Ser-225, Thr-318, Ser-319, Ser-366 and Ser-369 occur in a NEK7-dependent manner. Post-translationally, polyubiquitinated.

The protein localises to the cell projection. Its subcellular location is the cilium. It is found in the cytoplasm. May be involved in vasopressin signaling in the kidney. This chain is Ankyrin repeat and SAM domain-containing protein 3 (Anks3), found in Rattus norvegicus (Rat).